A 345-amino-acid chain; its full sequence is Major capsid protein (345 aa).

Intercapsomeric interactions stretches follow at residues 11-25 and 152-156; these read GTNQGKGVVAAGDKL and YNENI.

Belongs to the T7virus major capsid protein family. In terms of assembly, homohexamer. Interacts with the connector protein and the minor capsid protein. Interacts with the capsid assembly scaffolding protein; capsid proteins and scaffolding proteins form building blocks that assemble to form the procapsid, each hexamer of the major capsid protein interacting with 2 scaffolding proteins.

Its subcellular location is the virion. In terms of biological role, assembles with the minor capsid protein to form an icosahedral capsid with a T=7 symmetry, about 60 nm in diameter, and consisting of 415 capsid proteins. The major and minor capsid proteins are incorporated into the capsid in about a 90/10 ratio respectively. Once the capsid is formed, encapsidates one single copy of the viral genome. This Escherichia coli (Bacteriophage T7) protein is Major capsid protein.